The chain runs to 177 residues: Inorganic pyrophosphatase (177 aa).

Substrate is bound by residues lysine 30, arginine 44, and tyrosine 56. Mg(2+) contacts are provided by aspartate 66, aspartate 71, and aspartate 103. Residue tyrosine 142 participates in substrate binding.

It belongs to the PPase family. In terms of assembly, homohexamer. The cofactor is Mg(2+).

It localises to the cytoplasm. The enzyme catalyses diphosphate + H2O = 2 phosphate + H(+). Its function is as follows. Catalyzes the hydrolysis of inorganic pyrophosphate (PPi) forming two phosphate ions. This Mesorhizobium japonicum (strain LMG 29417 / CECT 9101 / MAFF 303099) (Mesorhizobium loti (strain MAFF 303099)) protein is Inorganic pyrophosphatase.